A 257-amino-acid polypeptide reads, in one-letter code: MLILVSPAKTLDFDNPPGCESYSMPTLLDQSKQLIEVCRTLTPTDIATLMKVSDKIAGLNVARFSSWQKDFTPENAKQAVFAFRGDVYTGLDADTLSEASLQKAQKQLRILSGLYGLLKPLDLMQAYRLEMGTRLANDRGTNLYQFWGDIITDEINKTTEEQGDEFIINLASNEYFKAVKPKQLNAQVITPIFKDCKNGQYKVISFFAKKARGMMVRYILDNHVDSLEALIKFDTAGYYYSEKDSTVNEPVFLREAQ.

This sequence belongs to the UPF0246 family.

This chain is UPF0246 protein Shal_1126, found in Shewanella halifaxensis (strain HAW-EB4).